The following is a 341-amino-acid chain: Ectoine-binding periplasmic protein TeaA (341 aa).

Positions 1-25 (MKAYKLLTTASIGALMLGMSTAAYS) are cleaved as a signal peptide. Residues E34, R169, N209, W213, and F234 each coordinate L-ectoine.

It belongs to the bacterial solute-binding protein 7 family. As to quaternary structure, monomer. The complex comprises the extracytoplasmic solute receptor protein TeaA, and the two transmembrane proteins TeaB and TeaC.

Its subcellular location is the periplasm. Part of the tripartite ATP-independent periplasmic (TRAP) transport system TeaABC involved in the uptake of ectoine and hydroxyectoine in response to osmotic upshock. Probably functions as a recovery system for synthesized ectoine that leaks out of the cell. Binds ectoine with high affinity. Affinity for hydroxyectoine is approximately 20-fold lower. The sequence is that of Ectoine-binding periplasmic protein TeaA (teaA) from Halomonas elongata (strain ATCC 33173 / DSM 2581 / NBRC 15536 / NCIMB 2198 / 1H9).